The sequence spans 252 residues: dITP/XTP pyrophosphatase (252 aa).

7-12 (THNEGK) serves as a coordination point for substrate. Catalysis depends on Asp74, which acts as the Proton acceptor. Residue Asp74 coordinates Mg(2+). Substrate-binding positions include Ser75 and 193-196 (FGYD). The tract at residues 201 to 224 (PDDQPAGRVSTEPDHEGEPLTSAE) is disordered. Substrate-binding positions include Lys230 and 235-236 (HR).

Belongs to the HAM1 NTPase family. Homodimer. Mg(2+) is required as a cofactor.

The catalysed reaction is XTP + H2O = XMP + diphosphate + H(+). It catalyses the reaction dITP + H2O = dIMP + diphosphate + H(+). The enzyme catalyses ITP + H2O = IMP + diphosphate + H(+). Its function is as follows. Pyrophosphatase that catalyzes the hydrolysis of nucleoside triphosphates to their monophosphate derivatives, with a high preference for the non-canonical purine nucleotides XTP (xanthosine triphosphate), dITP (deoxyinosine triphosphate) and ITP. Seems to function as a house-cleaning enzyme that removes non-canonical purine nucleotides from the nucleotide pool, thus preventing their incorporation into DNA/RNA and avoiding chromosomal lesions. The polypeptide is dITP/XTP pyrophosphatase (Bifidobacterium longum subsp. infantis (strain ATCC 15697 / DSM 20088 / JCM 1222 / NCTC 11817 / S12)).